Reading from the N-terminus, the 156-residue chain is ATP synthase subunit b (156 aa).

A helical transmembrane segment spans residues 5–25 (LTLIVQMLVFAAFVLFTMKLV).

It belongs to the ATPase B chain family. As to quaternary structure, F-type ATPases have 2 components, F(1) - the catalytic core - and F(0) - the membrane proton channel. F(1) has five subunits: alpha(3), beta(3), gamma(1), delta(1), epsilon(1). F(0) has three main subunits: a(1), b(2) and c(10-14). The alpha and beta chains form an alternating ring which encloses part of the gamma chain. F(1) is attached to F(0) by a central stalk formed by the gamma and epsilon chains, while a peripheral stalk is formed by the delta and b chains.

It is found in the cell inner membrane. In terms of biological role, f(1)F(0) ATP synthase produces ATP from ADP in the presence of a proton or sodium gradient. F-type ATPases consist of two structural domains, F(1) containing the extramembraneous catalytic core and F(0) containing the membrane proton channel, linked together by a central stalk and a peripheral stalk. During catalysis, ATP synthesis in the catalytic domain of F(1) is coupled via a rotary mechanism of the central stalk subunits to proton translocation. Component of the F(0) channel, it forms part of the peripheral stalk, linking F(1) to F(0). This chain is ATP synthase subunit b, found in Legionella pneumophila (strain Paris).